Reading from the N-terminus, the 491-residue chain is 2,3-bisphosphoglycerate-independent phosphoglycerate mutase (491 aa).

Positions 11 and 61 each coordinate Mn(2+). The Phosphoserine intermediate role is filled by Ser-61. Residues His-118, 147–148 (RD), Arg-177, Arg-183, 247–250 (RNDR), and Lys-320 each bind substrate. Mn(2+) is bound by residues Asp-386, His-390, Asp-427, His-428, and His-445.

It belongs to the BPG-independent phosphoglycerate mutase family. As to quaternary structure, monomer. Mn(2+) is required as a cofactor.

The catalysed reaction is (2R)-2-phosphoglycerate = (2R)-3-phosphoglycerate. Its pathway is carbohydrate degradation; glycolysis; pyruvate from D-glyceraldehyde 3-phosphate: step 3/5. Its function is as follows. Catalyzes the interconversion of 2-phosphoglycerate and 3-phosphoglycerate. The sequence is that of 2,3-bisphosphoglycerate-independent phosphoglycerate mutase from Helicobacter pylori (strain J99 / ATCC 700824) (Campylobacter pylori J99).